The following is a 335-amino-acid chain: Luciferase-like monooxygenase (335 aa).

The protein to bacterial alkanal monooxygenase alpha and beta chains.

The sequence is that of Luciferase-like monooxygenase (yhbW) from Escherichia coli O6:H1 (strain CFT073 / ATCC 700928 / UPEC).